A 321-amino-acid chain; its full sequence is Methenyltetrahydromethanopterin cyclohydrolase (321 aa).

Belongs to the MCH family.

Its subcellular location is the cytoplasm. The catalysed reaction is 5,10-methenyl-5,6,7,8-tetrahydromethanopterin + H2O = N(5)-formyl-5,6,7,8-tetrahydromethanopterin + H(+). It participates in one-carbon metabolism; methanogenesis from CO(2); 5,10-methenyl-5,6,7,8-tetrahydromethanopterin from CO(2): step 3/3. In terms of biological role, catalyzes the reversible interconversion of 5-formyl-H(4)MPT to methenyl-H(4)MPT(+). In Methanosarcina barkeri (strain Fusaro / DSM 804), this protein is Methenyltetrahydromethanopterin cyclohydrolase (mch).